A 119-amino-acid polypeptide reads, in one-letter code: Large ribosomal subunit protein bL20 (119 aa).

The protein belongs to the bacterial ribosomal protein bL20 family.

In terms of biological role, binds directly to 23S ribosomal RNA and is necessary for the in vitro assembly process of the 50S ribosomal subunit. It is not involved in the protein synthesizing functions of that subunit. The polypeptide is Large ribosomal subunit protein bL20 (Xylella fastidiosa (strain M23)).